We begin with the raw amino-acid sequence, 271 residues long: Tryptophan synthase alpha chain (271 aa).

Catalysis depends on proton acceptor residues Glu59 and Asp70.

It belongs to the TrpA family. As to quaternary structure, tetramer of two alpha and two beta chains.

It catalyses the reaction (1S,2R)-1-C-(indol-3-yl)glycerol 3-phosphate + L-serine = D-glyceraldehyde 3-phosphate + L-tryptophan + H2O. It participates in amino-acid biosynthesis; L-tryptophan biosynthesis; L-tryptophan from chorismate: step 5/5. Functionally, the alpha subunit is responsible for the aldol cleavage of indoleglycerol phosphate to indole and glyceraldehyde 3-phosphate. In Methanosarcina mazei (strain ATCC BAA-159 / DSM 3647 / Goe1 / Go1 / JCM 11833 / OCM 88) (Methanosarcina frisia), this protein is Tryptophan synthase alpha chain.